Reading from the N-terminus, the 534-residue chain is Phosphoenolpyruvate carboxykinase (ATP) (534 aa).

3 residues coordinate substrate: Arg-58, Tyr-194, and Lys-200. ATP-binding positions include Lys-200, His-219, and 235-243 (GLSGTGKTT). Residues Lys-200 and His-219 each coordinate Mn(2+). Mn(2+) is bound at residue Asp-256. Residues Glu-284, Arg-322, and Thr-449 each contribute to the ATP site. Arg-322 provides a ligand contact to substrate.

Belongs to the phosphoenolpyruvate carboxykinase (ATP) family. Mn(2+) serves as cofactor.

Its subcellular location is the cytoplasm. The catalysed reaction is oxaloacetate + ATP = phosphoenolpyruvate + ADP + CO2. It participates in carbohydrate biosynthesis; gluconeogenesis. In terms of biological role, involved in the gluconeogenesis. Catalyzes the conversion of oxaloacetate (OAA) to phosphoenolpyruvate (PEP) through direct phosphoryl transfer between the nucleoside triphosphate and OAA. This is Phosphoenolpyruvate carboxykinase (ATP) from Novosphingobium aromaticivorans (strain ATCC 700278 / DSM 12444 / CCUG 56034 / CIP 105152 / NBRC 16084 / F199).